The sequence spans 159 residues: Succinate dehydrogenase [ubiquinone] cytochrome b small subunit, mitochondrial (159 aa).

A mitochondrion-targeting transit peptide spans 1–30 (MLQTRLGLGALRQGRLLFAVKSFSTTSVAK). Residues 31-65 (IFPPPPQTIKGTVNDAAVFPHHSKLHGSYHWDFER) lie on the Mitochondrial matrix side of the membrane. Residues 66–82 (IIAIAMVPQVMIPLFTG) traverse the membrane as a helical segment. The Mitochondrial intermembrane segment spans residues 83 to 89 (TSHPLMD). A helical transmembrane segment spans residues 90–109 (AALACTLITHAHLGFESCVI). H99 lines the heme pocket. The Mitochondrial matrix portion of the chain corresponds to 110–122 (DYFPARRFKKLSP). Residue Y111 coordinates a ubiquinone. Residues 123 to 140 (LMHWILRGCTVLTLIGVY) form a helical membrane-spanning segment. Topologically, residues 141-159 (EFNTNDIGLTEGIKKLWKS) are mitochondrial intermembrane.

This sequence belongs to the CybS family. In terms of assembly, forms part of complex II containing four subunits: a flavoprotein (FP), an iron-sulfur protein (IP) and a cytochrome b composed of a large and a small subunit.

Its subcellular location is the mitochondrion inner membrane. It functions in the pathway carbohydrate metabolism; tricarboxylic acid cycle. In terms of biological role, membrane-anchoring subunit of succinate dehydrogenase (SDH) that is involved in complex II of the mitochondrial electron transport chain and is responsible for transferring electrons from succinate to ubiquinone (coenzyme Q). The protein is Succinate dehydrogenase [ubiquinone] cytochrome b small subunit, mitochondrial (sdh4) of Schizosaccharomyces pombe (strain 972 / ATCC 24843) (Fission yeast).